We begin with the raw amino-acid sequence, 62 residues long: Sperm protamine P1 (62 aa).

The segment at 1–62 (MARYRRRSRS…RYSRRGRRRY (62 aa)) is disordered.

The protein belongs to the protamine P1 family. Testis.

The protein localises to the nucleus. The protein resides in the chromosome. In terms of biological role, protamines substitute for histones in the chromatin of sperm during the haploid phase of spermatogenesis. They compact sperm DNA into a highly condensed, stable and inactive complex. The chain is Sperm protamine P1 (PRM1) from Sarcophilus harrisii (Tasmanian devil).